Consider the following 164-residue polypeptide: UPF0304 protein Asuc_0543 (164 aa).

It belongs to the UPF0304 family.

The sequence is that of UPF0304 protein Asuc_0543 from Actinobacillus succinogenes (strain ATCC 55618 / DSM 22257 / CCUG 43843 / 130Z).